The primary structure comprises 125 residues: Small ribosomal subunit protein uS13 (125 aa).

The interval 101–125 (QRTKTNARTRKGKRKTVANKKIAAK) is disordered.

It belongs to the universal ribosomal protein uS13 family. As to quaternary structure, part of the 30S ribosomal subunit. Forms a loose heterodimer with protein S19. Forms two bridges to the 50S subunit in the 70S ribosome.

Its function is as follows. Located at the top of the head of the 30S subunit, it contacts several helices of the 16S rRNA. In the 70S ribosome it contacts the 23S rRNA (bridge B1a) and protein L5 of the 50S subunit (bridge B1b), connecting the 2 subunits; these bridges are implicated in subunit movement. Contacts the tRNAs in the A and P-sites. This is Small ribosomal subunit protein uS13 from Borrelia duttonii (strain Ly).